The primary structure comprises 278 residues: Small ribosomal subunit protein uS3 (278 aa).

Residues 39-107 (LRKAISKKYV…KVQLNIVEIS (69 aa)) form the KH type-2 domain. Positions 255 to 278 (AEIPAEEKPKRVVKKAENITKEEE) are disordered.

The protein belongs to the universal ribosomal protein uS3 family. In terms of assembly, part of the 30S ribosomal subunit. Forms a tight complex with proteins S10 and S14.

Functionally, binds the lower part of the 30S subunit head. Binds mRNA in the 70S ribosome, positioning it for translation. The chain is Small ribosomal subunit protein uS3 from Dehalococcoides mccartyi (strain ATCC BAA-2100 / JCM 16839 / KCTC 5957 / BAV1).